The primary structure comprises 567 residues: Geranylgeranyl transferase type-2 subunit alpha (567 aa).

PFTA repeat units follow at residues 44–78 (LDESVLELTSQILGANPDFATLWNCRREVLQQLET), 88–122 (LVKAELGFLESCLRVNPKSYGTWHHRCWLLGRLPE), 124–158 (NWTRELELCARFLEVDERNFHCWDYRRFVATQAAV), 159–193 (PPAEELAFTDSLITRNFSNYSSWHYRSCLLPQLHP), 207–241 (VLLKELELVQNAFFTDPNDQSAWFYHRWLLGRADP), and 363–397 (VLQSELESCKELQELEPENKWCLLTIILLMRALDP). The residue at position 98 (serine 98) is a Phosphoserine. LRR repeat units follow at residues 442–463 (EVRVLHLAHKDLTVLCHLEQLL), 464–486 (LVTHLDLSHNRLRTLPPALAALR), 487–508 (CLEVLQASDNAIESLDGVTNLP), 509–530 (RLQELLLCNNRLQRPAVLQPLA), and 534–555 (RLVLLNLQGNPLCQAVGILEQL).

It belongs to the protein prenyltransferase subunit alpha family. Heterotrimer composed of RABGGTA, RABGGTB and CHM; within this trimer, RABGGTA and RABGGTB form the catalytic component B, while CHM (component A) mediates peptide substrate binding. The Rab GGTase dimer (RGGT) interacts with CHM (component A) prior to Rab protein binding; the association is stabilized by geranylgeranyl pyrophosphate (GGpp). The CHM:RGGT:Rab complex is destabilized by GGpp. Interacts with non-phosphorylated form of RAB8A; phosphorylation of RAB8A at 'Thr-72' disrupts this interaction.

It catalyses the reaction geranylgeranyl diphosphate + L-cysteinyl-[protein] = S-geranylgeranyl-L-cysteinyl-[protein] + diphosphate. Its activity is regulated as follows. The enzymatic reaction requires the aid of a Rab escort protein (also called component A), such as CHM. Catalyzes the transfer of a geranylgeranyl moiety from geranylgeranyl diphosphate to both cysteines of Rab proteins with the C-terminal sequence -XXCC, -XCXC and -CCXX, such as RAB1A, RAB3A, RAB5A and RAB7A. This chain is Geranylgeranyl transferase type-2 subunit alpha (RABGGTA), found in Pongo abelii (Sumatran orangutan).